The sequence spans 233 residues: 7-cyano-7-deazaguanine synthase (233 aa).

Residue 11–21 (FSGGQDSTTCL) participates in ATP binding. Cysteine 199, cysteine 214, cysteine 217, and cysteine 220 together coordinate Zn(2+).

This sequence belongs to the QueC family. The cofactor is Zn(2+).

It carries out the reaction 7-carboxy-7-deazaguanine + NH4(+) + ATP = 7-cyano-7-deazaguanine + ADP + phosphate + H2O + H(+). The protein operates within purine metabolism; 7-cyano-7-deazaguanine biosynthesis. Its function is as follows. Catalyzes the ATP-dependent conversion of 7-carboxy-7-deazaguanine (CDG) to 7-cyano-7-deazaguanine (preQ(0)). The protein is 7-cyano-7-deazaguanine synthase of Herminiimonas arsenicoxydans.